Reading from the N-terminus, the 170-residue chain is MDLKQYVTTVENWPKEGITFRDITTIMDHGPAYKYATDQIVEYAKELGAEIVVGPEARGFIIGCPVAYALEIGFAPVRKPGKLPRKVISADYGLEYGKDTLTMHNDAIKPGQKVLICDDLLATGGTVEATVRLVEQLGGQVVGCAFLIELLELNGREKLGDLNIKTLIQY.

Belongs to the purine/pyrimidine phosphoribosyltransferase family. In terms of assembly, homodimer.

Its subcellular location is the cytoplasm. The enzyme catalyses AMP + diphosphate = 5-phospho-alpha-D-ribose 1-diphosphate + adenine. It functions in the pathway purine metabolism; AMP biosynthesis via salvage pathway; AMP from adenine: step 1/1. In terms of biological role, catalyzes a salvage reaction resulting in the formation of AMP, that is energically less costly than de novo synthesis. This chain is Adenine phosphoribosyltransferase, found in Lysinibacillus sphaericus (strain C3-41).